A 451-amino-acid polypeptide reads, in one-letter code: Phosphoglucosamine mutase (451 aa).

The Phosphoserine intermediate role is filled by S107. 4 residues coordinate Mg(2+): S107, D246, D248, and D250. At S107 the chain carries Phosphoserine.

The protein belongs to the phosphohexose mutase family. It depends on Mg(2+) as a cofactor. Activated by phosphorylation.

The catalysed reaction is alpha-D-glucosamine 1-phosphate = D-glucosamine 6-phosphate. Catalyzes the conversion of glucosamine-6-phosphate to glucosamine-1-phosphate. The chain is Phosphoglucosamine mutase from Burkholderia multivorans (strain ATCC 17616 / 249).